The sequence spans 417 residues: Imidazolonepropionase (417 aa).

Residues His77 and His79 each contribute to the Fe(3+) site. Zn(2+) is bound by residues His77 and His79. 3 residues coordinate 4-imidazolone-5-propanoate: Arg86, Tyr149, and His182. An N-formimidoyl-L-glutamate-binding site is contributed by Tyr149. His247 is a Fe(3+) binding site. A Zn(2+)-binding site is contributed by His247. Gln250 contacts 4-imidazolone-5-propanoate. Asp322 contributes to the Fe(3+) binding site. Asp322 serves as a coordination point for Zn(2+). Positions 324 and 326 each coordinate N-formimidoyl-L-glutamate. Residue Thr327 coordinates 4-imidazolone-5-propanoate.

The protein belongs to the metallo-dependent hydrolases superfamily. HutI family. The cofactor is Zn(2+). Fe(3+) serves as cofactor.

The protein resides in the cytoplasm. It catalyses the reaction 4-imidazolone-5-propanoate + H2O = N-formimidoyl-L-glutamate. It functions in the pathway amino-acid degradation; L-histidine degradation into L-glutamate; N-formimidoyl-L-glutamate from L-histidine: step 3/3. In terms of biological role, catalyzes the hydrolytic cleavage of the carbon-nitrogen bond in imidazolone-5-propanoate to yield N-formimidoyl-L-glutamate. It is the third step in the universal histidine degradation pathway. This is Imidazolonepropionase from Cupriavidus necator (strain ATCC 17699 / DSM 428 / KCTC 22496 / NCIMB 10442 / H16 / Stanier 337) (Ralstonia eutropha).